The chain runs to 152 residues: Large ribosomal subunit protein uL15 (152 aa).

A disordered region spans residues 1–56 (MELNTLKPAKNSVKQNTRYGRGQGSGKGGTSTRGHKGAKSRSGYKSKPGFEGGQLP). The segment covering 21 to 31 (RGQGSGKGGTS) has biased composition (gly residues). Residues 33-44 (RGHKGAKSRSGY) show a composition bias toward basic residues.

It belongs to the universal ribosomal protein uL15 family. In terms of assembly, part of the 50S ribosomal subunit.

Its function is as follows. Binds to the 23S rRNA. The protein is Large ribosomal subunit protein uL15 of Amoebophilus asiaticus (strain 5a2).